We begin with the raw amino-acid sequence, 235 residues long: Probable inactive serine protease 37 (235 aa).

Residues 1–19 (MKFTFCLTVLAGTFFSAHS) form the signal peptide. A Peptidase S1 domain is found at 20–233 (SVQKDDPSPY…YVSWIESTTK (214 aa)). Intrachain disulfides connect C40–C56, C131–C198, and C163–C177.

The protein belongs to the peptidase S1 family.

The protein resides in the cytoplasmic vesicle. The protein localises to the secretory vesicle. Its subcellular location is the acrosome. It localises to the secreted. Plays a role in male fertility. May have a role in sperm migration or binding to zona-intact eggs. Involved in the activation of the proacrosin/acrosin system. The protein is Probable inactive serine protease 37 of Bos taurus (Bovine).